The following is a 150-amino-acid chain: UPF0756 membrane protein APL_0366 (150 aa).

A run of 4 helical transmembrane segments spans residues 12–34 (LVVL…ATVL), 52–72 (HGLS…IVSG), 82–102 (FLNW…WLGG), and 123–143 (IIGV…AGIL).

This sequence belongs to the UPF0756 family.

The protein localises to the cell membrane. The chain is UPF0756 membrane protein APL_0366 from Actinobacillus pleuropneumoniae serotype 5b (strain L20).